Here is a 276-residue protein sequence, read N- to C-terminus: MAIRVYKPTTAGRRNASVSDFSELTRSTPEKSLVRKKSKTGGRNSYGRITSRHRGGGHKRQYRLIDFKRWDKDGVPAKVAEIEYDPNRSARIALLHFADGEKRYIIAPKGIKQGDVIETGAQADIKPGNNLPLKNIPTGTVVHAIELRPLGGAKIARSAGAAVQLVAKDGAYAQLRMPSGEIRNVDARCRATVGEVGNEDHANIQLGKAGRARWIGHRPITRGESMNPVDHPHGGRTRGGKPPVSPWGKGEVRTRRPKKASNKMIVRRRPSGKNRK.

Disordered stretches follow at residues 14–58 and 221–276; these read RNAS…GGGH and TRGE…KNRK. The span at 16–27 shows a compositional bias: polar residues; it reads ASVSDFSELTRS. The segment covering 255–276 has biased composition (basic residues); that stretch reads RRPKKASNKMIVRRRPSGKNRK.

The protein belongs to the universal ribosomal protein uL2 family. Part of the 50S ribosomal subunit. Forms a bridge to the 30S subunit in the 70S ribosome.

One of the primary rRNA binding proteins. Required for association of the 30S and 50S subunits to form the 70S ribosome, for tRNA binding and peptide bond formation. It has been suggested to have peptidyltransferase activity; this is somewhat controversial. Makes several contacts with the 16S rRNA in the 70S ribosome. This is Large ribosomal subunit protein uL2 from Bifidobacterium longum subsp. infantis (strain ATCC 15697 / DSM 20088 / JCM 1222 / NCTC 11817 / S12).